Here is a 252-residue protein sequence, read N- to C-terminus: Iron-sulfur cluster co-chaperone protein HscB homolog (252 aa).

Residues 1-59 (MKKTKTMVASISTLIRRTYPSTNQCNSLATIQSQTQLPRESLQHHSSAEGRLRFSGRVF) constitute a mitochondrion transit peptide. A J domain is found at 93-165 (DYFQIFGLEK…LSRAMYIMKL (73 aa)).

The protein belongs to the HscB family. In terms of assembly, interacts with ISU1 and HSP70-9/HSCA1.

Its subcellular location is the mitochondrion. The protein resides in the cytoplasm. It is found in the cytosol. Functionally, co-chaperone required for the assembly of iron-sulfur [Fe-S] clusters in both mitochondria and cytosol. Required for the activity of iron-sulfur proteins such as aconitase and succinate dehydrogenase. Involved in iron homeostasis and may take part in the control of iron translocation from roots to shoots. This chain is Iron-sulfur cluster co-chaperone protein HscB homolog, found in Arabidopsis thaliana (Mouse-ear cress).